The chain runs to 1375 residues: DNA-directed RNA polymerase subunit beta (1375 aa).

The protein belongs to the RNA polymerase beta chain family. As to quaternary structure, the RNAP catalytic core consists of 2 alpha, 1 beta, 1 beta' and 1 omega subunit. When a sigma factor is associated with the core the holoenzyme is formed, which can initiate transcription.

The catalysed reaction is RNA(n) + a ribonucleoside 5'-triphosphate = RNA(n+1) + diphosphate. In terms of biological role, DNA-dependent RNA polymerase catalyzes the transcription of DNA into RNA using the four ribonucleoside triphosphates as substrates. The chain is DNA-directed RNA polymerase subunit beta from Coxiella burnetii (strain RSA 331 / Henzerling II).